We begin with the raw amino-acid sequence, 399 residues long: Guanine nucleotide-binding protein negative regulator 1 (399 aa).

6 WD repeats span residues 44–83 (KPLN…LSKK), 105–145 (YSYS…NKAS), 150–194 (DHQE…VMTT), 207–247 (SLKG…PCQL), 252–292 (ERGN…DMVY), and 296–337 (GHRG…EETH).

In terms of assembly, interacts with gpa1.

The protein localises to the cytoplasm. Its function is as follows. Negatively regulates the pheromone-response pathway. Acts as a structural mimic of the G protein beta subunit thereby interacting with gpa1 which then inhibits gpa1 signaling. This is Guanine nucleotide-binding protein negative regulator 1 (gnr1) from Schizosaccharomyces pombe (strain 972 / ATCC 24843) (Fission yeast).